Here is a 279-residue protein sequence, read N- to C-terminus: NLP effector protein 9 (279 aa).

An N-terminal signal peptide occupies residues 1 to 19 (MKISNLLGVLVVFLAVVKG). The Conserved undecapeptide motif signature appears at 151 to 161 (AIMYAWYFPDI). An N-linked (GlcNAc...) asparagine glycan is attached at Asn-176.

Belongs to the Necrosis inducing protein (NPP1) family.

It localises to the secreted. Secreted effector that acts as a pathogen-associated molecular pattern (PAMP) recognized by the plant immune system. Seems not to induce necrosis in Nicotiana benthamiana leaves. This Plasmopara viticola (Downy mildew of grapevine) protein is NLP effector protein 9.